The chain runs to 131 residues: EG45-like domain containing protein (131 aa).

Residues 1–24 form the signal peptide; that stretch reads MGVGTKVLVITTMAICLISSAAYA. An Expansin-like EG45; incomplete domain is found at 27–131; it reads GTATFYTPPY…GKIKIEFNQA (105 aa). Cysteine 73 and cysteine 85 are disulfide-bonded.

Expressed in the outer layer of xylem and the vascular cambial zone of roots, in shoot cambium, but not in leaves.

It is found in the secreted. Functionally, might have a systemic role in water and solute homeostasis. Has no expansin-like activity. In Citrus jambhiri (Rough lemon), this protein is EG45-like domain containing protein (CjBAp12).